A 363-amino-acid polypeptide reads, in one-letter code: tRNA dimethylallyltransferase (363 aa).

Residue 65-72 (GPTASGKS) participates in ATP binding. Residue 67–72 (TASGKS) coordinates substrate. 2 interaction with substrate tRNA regions span residues 90-93 (DSMQ) and 214-218 (QRLIR).

It belongs to the IPP transferase family. In terms of assembly, monomer. It depends on Mg(2+) as a cofactor.

The catalysed reaction is adenosine(37) in tRNA + dimethylallyl diphosphate = N(6)-dimethylallyladenosine(37) in tRNA + diphosphate. Its function is as follows. Catalyzes the transfer of a dimethylallyl group onto the adenine at position 37 in tRNAs that read codons beginning with uridine, leading to the formation of N6-(dimethylallyl)adenosine (i(6)A). This is tRNA dimethylallyltransferase from Rickettsia massiliae (strain Mtu5).